Consider the following 1081-residue polypeptide: Carbamoyl phosphate synthase large chain (1081 aa).

The segment at 1–403 (MPRRNDLNKI…SFQKALRSLE (403 aa)) is carboxyphosphate synthetic domain. ATP is bound by residues R129, R170, G177, K209, L211, E216, G242, V243, H244, Q286, and E300. The region spanning 133 to 329 (KEAMARIGVP…IAKFAAKLAV (197 aa)) is the ATP-grasp 1 domain. Mg(2+) contacts are provided by Q286, E300, and N302. The Mn(2+) site is built by Q286, E300, and N302. An oligomerization domain region spans residues 404–553 (TGRFGFGCDR…STYEPEECEV (150 aa)). The tract at residues 554 to 944 (LPSDKPKVMI…AFAKAELGAG (391 aa)) is carbamoyl phosphate synthetic domain. One can recognise an ATP-grasp 2 domain in the interval 686-878 (EKILHELEIS…LAKIASLVMS (193 aa)). ATP-binding residues include R722, K761, L763, E768, G794, I795, H796, S797, Q837, and E849. Residues Q837, E849, and N851 each contribute to the Mg(2+) site. The Mn(2+) site is built by Q837, E849, and N851. The MGS-like domain maps to 945 to 1081 (VILATTGTVF…DVKALQDYLG (137 aa)). Residues 945–1081 (VILATTGTVF…DVKALQDYLG (137 aa)) form an allosteric domain region.

Belongs to the CarB family. In terms of assembly, composed of two chains; the small (or glutamine) chain promotes the hydrolysis of glutamine to ammonia, which is used by the large (or ammonia) chain to synthesize carbamoyl phosphate. Tetramer of heterodimers (alpha,beta)4. Mg(2+) is required as a cofactor. The cofactor is Mn(2+).

The catalysed reaction is hydrogencarbonate + L-glutamine + 2 ATP + H2O = carbamoyl phosphate + L-glutamate + 2 ADP + phosphate + 2 H(+). It catalyses the reaction hydrogencarbonate + NH4(+) + 2 ATP = carbamoyl phosphate + 2 ADP + phosphate + 2 H(+). Its pathway is amino-acid biosynthesis; L-arginine biosynthesis; carbamoyl phosphate from bicarbonate: step 1/1. It functions in the pathway pyrimidine metabolism; UMP biosynthesis via de novo pathway; (S)-dihydroorotate from bicarbonate: step 1/3. In terms of biological role, large subunit of the glutamine-dependent carbamoyl phosphate synthetase (CPSase). CPSase catalyzes the formation of carbamoyl phosphate from the ammonia moiety of glutamine, carbonate, and phosphate donated by ATP, constituting the first step of 2 biosynthetic pathways, one leading to arginine and/or urea and the other to pyrimidine nucleotides. The large subunit (synthetase) binds the substrates ammonia (free or transferred from glutamine from the small subunit), hydrogencarbonate and ATP and carries out an ATP-coupled ligase reaction, activating hydrogencarbonate by forming carboxy phosphate which reacts with ammonia to form carbamoyl phosphate. The protein is Carbamoyl phosphate synthase large chain of Synechocystis sp. (strain ATCC 27184 / PCC 6803 / Kazusa).